A 461-amino-acid polypeptide reads, in one-letter code: Bifunctional protein GlmU (461 aa).

The segment at Met1–Arg230 is pyrophosphorylase. UDP-N-acetyl-alpha-D-glucosamine is bound by residues Leu9–Gly12, Lys23, Gln73, Gly78–Thr79, Tyr101–Asp103, Gly140, Glu155, Asn170, and Asn228. Residue Asp103 coordinates Mg(2+). A Mg(2+)-binding site is contributed by Asn228. The interval Val231 to Asn251 is linker. The tract at residues Gly252–Glu461 is N-acetyltransferase. UDP-N-acetyl-alpha-D-glucosamine-binding residues include Arg333 and Lys351. His363 serves as the catalytic Proton acceptor. Residues Tyr366 and Asn377 each contribute to the UDP-N-acetyl-alpha-D-glucosamine site. Residues Asn386–Tyr387, Ala423, and Arg440 contribute to the acetyl-CoA site.

This sequence in the N-terminal section; belongs to the N-acetylglucosamine-1-phosphate uridyltransferase family. It in the C-terminal section; belongs to the transferase hexapeptide repeat family. Homotrimer. The cofactor is Mg(2+).

Its subcellular location is the cytoplasm. It catalyses the reaction alpha-D-glucosamine 1-phosphate + acetyl-CoA = N-acetyl-alpha-D-glucosamine 1-phosphate + CoA + H(+). The enzyme catalyses N-acetyl-alpha-D-glucosamine 1-phosphate + UTP + H(+) = UDP-N-acetyl-alpha-D-glucosamine + diphosphate. The protein operates within nucleotide-sugar biosynthesis; UDP-N-acetyl-alpha-D-glucosamine biosynthesis; N-acetyl-alpha-D-glucosamine 1-phosphate from alpha-D-glucosamine 6-phosphate (route II): step 2/2. It participates in nucleotide-sugar biosynthesis; UDP-N-acetyl-alpha-D-glucosamine biosynthesis; UDP-N-acetyl-alpha-D-glucosamine from N-acetyl-alpha-D-glucosamine 1-phosphate: step 1/1. It functions in the pathway bacterial outer membrane biogenesis; LPS lipid A biosynthesis. Its function is as follows. Catalyzes the last two sequential reactions in the de novo biosynthetic pathway for UDP-N-acetylglucosamine (UDP-GlcNAc). The C-terminal domain catalyzes the transfer of acetyl group from acetyl coenzyme A to glucosamine-1-phosphate (GlcN-1-P) to produce N-acetylglucosamine-1-phosphate (GlcNAc-1-P), which is converted into UDP-GlcNAc by the transfer of uridine 5-monophosphate (from uridine 5-triphosphate), a reaction catalyzed by the N-terminal domain. The polypeptide is Bifunctional protein GlmU (Acetivibrio thermocellus (strain ATCC 27405 / DSM 1237 / JCM 9322 / NBRC 103400 / NCIMB 10682 / NRRL B-4536 / VPI 7372) (Clostridium thermocellum)).